The primary structure comprises 464 residues: Sulfoacetaldehyde dehydrogenase (acylating) (464 aa).

Cys-241 functions as the Nucleophile in the catalytic mechanism.

The protein belongs to the aldehyde dehydrogenase family.

It catalyses the reaction sulfoacetaldehyde + NADP(+) + CoA = sulfoacetyl-CoA + NADPH + H(+). Involved in the degradation of sulfoacetate. Catalyzes the conversion of sulfoacetyl-CoA and NADPH to sulfoacetaldehyde, CoA and NADP(+). A much lower level of activity (1%) is observed when NADP(+) is replaced with NAD(+). This is Sulfoacetaldehyde dehydrogenase (acylating) from Bilophila wadsworthia (strain 3_1_6).